We begin with the raw amino-acid sequence, 231 residues long: Cutinase 2 (231 aa).

The N-terminal stretch at 1–16 (MKFFALTTLLAATASA) is a signal peptide. A disulfide bridge links C48 with C126. Residue S137 is the Nucleophile of the active site. A disulfide bridge links C188 with C195. D192 is a catalytic residue. H205 functions as the Proton donor/acceptor in the catalytic mechanism.

The protein belongs to the cutinase family. Post-translationally, the 2 disulfide bonds play a critical role in holding the catalytic residues in juxta-position; reduction of the disulfide bridges results in the complete inactivation of the enzyme.

The protein localises to the secreted. It catalyses the reaction cutin + H2O = cutin monomers.. Catalyzes the hydrolysis of complex carboxylic polyesters found in the cell wall of plants. Degrades cutin, a macromolecule that forms the structure of the plant cuticle. Allows pathogenic fungi to penetrate through the cuticular barrier into the host plant during the initial stage of fungal infection. The chain is Cutinase 2 (CUT2) from Fusarium vanettenii (Neocosmospora pisi).